The chain runs to 690 residues: Methionine--tRNA ligase 1 (690 aa).

Residues 11 to 21 carry the 'HIGH' region motif; sequence PYANGHIHIGH. Zn(2+)-binding residues include Cys142, Cys145, Cys155, and Cys158. A 'KMSKS' region motif is present at residues 328–332; the sequence is KMSKS. Lys331 contacts ATP. One can recognise a tRNA-binding domain in the interval 590 to 690; sequence DFSKVDLRVA…SGAKPGMRVH (101 aa).

Belongs to the class-I aminoacyl-tRNA synthetase family. MetG type 1 subfamily. Homodimer. Zn(2+) serves as cofactor.

The protein resides in the cytoplasm. The catalysed reaction is tRNA(Met) + L-methionine + ATP = L-methionyl-tRNA(Met) + AMP + diphosphate. Is required not only for elongation of protein synthesis but also for the initiation of all mRNA translation through initiator tRNA(fMet) aminoacylation. This chain is Methionine--tRNA ligase 1, found in Sorangium cellulosum (strain So ce56) (Polyangium cellulosum (strain So ce56)).